Reading from the N-terminus, the 142-residue chain is MLRRDAWRQARFVHPRSYREKILRSLFFALTARINQMRRLDPEEYPEDPIEGYDRFLEIVREYAEDPDYDSPLLLLYESLSAAYAIFLRGEPVHPPGTEFPGVGKVRRTDDCYYCPIKERREDQPGSFCTLCPAEQDPEVVS.

Belongs to the UPF0305 family.

This is UPF0305 protein MK0666 from Methanopyrus kandleri (strain AV19 / DSM 6324 / JCM 9639 / NBRC 100938).